The chain runs to 233 residues: MSSNNIKLKYDSGNILSKDVHSIGIIALGSHRENHGAALPIDTDSKIAANVALNVATKTGATFLGIFYGATEYDYIKHGHHLKKDDLVNKQIIPQLINIKKQLNIKSVIIVNGHGGNNLIIEDIDKISKKTELKIIFNNSIIESEGPHACTGELSMGAVLGITDMTSLKEHENFIKHPEVGMVGLKEARDNEPIINKEALTIEKEGFEVNMILGQDMLENAQKEIINEVKKLL.

The Fe cation site is built by glutamate 33, histidine 35, aspartate 44, and histidine 114.

It belongs to the creatininase superfamily. FAPy deformylase family. In terms of assembly, homodimer. The cofactor is Fe(2+). Zn(2+) is required as a cofactor.

It carries out the reaction 2-amino-5-formylamino-6-(5-phospho-D-ribosylamino)pyrimidin-4(3H)-one + H2O = 2,5-diamino-6-(1-D-ribosylamino)pyrimidin-4(3H)-one 5'-phosphate + formate + H(+). It functions in the pathway cofactor biosynthesis; coenzyme F420 biosynthesis. Its pathway is cofactor biosynthesis; riboflavin biosynthesis. Functionally, catalyzes the hydrolysis of the formamide of 2-amino-5-formylamino-6-ribosylamino-4(3H)-pyrimidinone 5'-monophosphate (FAPy) to form 2,5-diamino-6-ribosylamino-4(3H)-pyrimidinone 5'-phosphate (APy). The protein is 2-amino-5-formylamino-6-ribosylaminopyrimidin-4(3H)-one 5'-monophosphate deformylase of Methanosphaera stadtmanae (strain ATCC 43021 / DSM 3091 / JCM 11832 / MCB-3).